A 525-amino-acid chain; its full sequence is GMP synthase [glutamine-hydrolyzing] (525 aa).

A Glutamine amidotransferase type-1 domain is found at 9 to 207; sequence RILILDFGSQ…VRDICQCEAL (199 aa). Residue cysteine 86 is the Nucleophile of the active site. Residues histidine 181 and glutamate 183 contribute to the active site. In terms of domain architecture, GMPS ATP-PPase spans 208–400; it reads WTPAKIIDDA…LGLPYDMLYR (193 aa). ATP is bound at residue 235–241; sequence SGGVDSS.

Homodimer.

It catalyses the reaction XMP + L-glutamine + ATP + H2O = GMP + L-glutamate + AMP + diphosphate + 2 H(+). It functions in the pathway purine metabolism; GMP biosynthesis; GMP from XMP (L-Gln route): step 1/1. In terms of biological role, catalyzes the synthesis of GMP from XMP. The sequence is that of GMP synthase [glutamine-hydrolyzing] from Salmonella typhimurium (strain LT2 / SGSC1412 / ATCC 700720).